The chain runs to 115 residues: Large ribosomal subunit protein bL20 (115 aa).

The protein belongs to the bacterial ribosomal protein bL20 family.

Its function is as follows. Binds directly to 23S ribosomal RNA and is necessary for the in vitro assembly process of the 50S ribosomal subunit. It is not involved in the protein synthesizing functions of that subunit. The sequence is that of Large ribosomal subunit protein bL20 from Prochlorococcus marinus subsp. pastoris (strain CCMP1986 / NIES-2087 / MED4).